Reading from the N-terminus, the 497-residue chain is Histidine--tRNA ligase (497 aa).

It belongs to the class-II aminoacyl-tRNA synthetase family. In terms of assembly, homodimer.

Its subcellular location is the cytoplasm. The enzyme catalyses tRNA(His) + L-histidine + ATP = L-histidyl-tRNA(His) + AMP + diphosphate + H(+). The polypeptide is Histidine--tRNA ligase (Dinoroseobacter shibae (strain DSM 16493 / NCIMB 14021 / DFL 12)).